A 736-amino-acid polypeptide reads, in one-letter code: Na(+)/H(+) antiporter NhaA (736 aa).

The segment at 1-387 is na(+)/H(+) antiporter NhaA; the sequence is MNHSPQSARP…ICGYLLLRAA (387 aa). Helical transmembrane passes span 23-43, 58-78, 96-116, 126-146, 155-175, 178-198, 201-221, 224-244, 265-285, 298-318, 334-354, and 367-387; these read AGGI…NSPF, LSLA…LVGL, MLPG…FAVL, GWAV…SLLG, VFLA…IAIF, AEIS…LFVM, MGVV…FFVF, GVHA…KPAP, VAFI…FKGL, ILLG…WLAI, LYGV…IGLL, and IGVL…LRAA. Residues 388–736 are peptidase S49; it reads RPDQSAANPL…EKAIWARYGL (349 aa).

It in the N-terminal section; belongs to the NhaA Na(+)/H(+) (TC 2.A.33) antiporter family. This sequence in the C-terminal section; belongs to the peptidase S49 family.

It is found in the cell inner membrane. The catalysed reaction is Na(+)(in) + 2 H(+)(out) = Na(+)(out) + 2 H(+)(in). Na(+)/H(+) antiporter that extrudes sodium in exchange for external protons. The protein is Na(+)/H(+) antiporter NhaA of Brucella abortus (strain 2308).